We begin with the raw amino-acid sequence, 248 residues long: tRNA (guanine-N(1)-)-methyltransferase (248 aa).

Residues glycine 113 and 133–138 (IGDYVL) contribute to the S-adenosyl-L-methionine site. The tract at residues 227–248 (RPAQTIRAKGESQKTPKNKTDG) is disordered. A compositionally biased stretch (basic and acidic residues) spans 234-248 (AKGESQKTPKNKTDG).

This sequence belongs to the RNA methyltransferase TrmD family. In terms of assembly, homodimer.

Its subcellular location is the cytoplasm. It catalyses the reaction guanosine(37) in tRNA + S-adenosyl-L-methionine = N(1)-methylguanosine(37) in tRNA + S-adenosyl-L-homocysteine + H(+). In terms of biological role, specifically methylates guanosine-37 in various tRNAs. In Rhodopseudomonas palustris (strain TIE-1), this protein is tRNA (guanine-N(1)-)-methyltransferase.